The chain runs to 367 residues: Tetraprenyl-beta-curcumene synthase (367 aa).

Belongs to the large terpene synthase family.

The catalysed reaction is all-trans-heptaprenyl diphosphate = (R)-tetraprenyl-beta-curcumene + diphosphate. Functionally, catalyzes the transformation of a linear C35 prenyl diphosphate chain to form tetraprenyl-beta-curcumene. In Bacillus subtilis (strain 168), this protein is Tetraprenyl-beta-curcumene synthase (ytpB).